Consider the following 428-residue polypeptide: MKMERSLNLFEEAQRYLVGGVNSPVRAFKSVGMEPLFIQKGKGSRVWDVDGNEYIDYVLSWGPLILGHANDQIVNAIKQVANYGTSFGAPTELEIEMAKAVVDAVPSIEMVRFVNSGTEATMSAIRLARGYTGKKKIVKFEGCYHGHVDSLLVSAGSGVATLSIPGTPGIPEEFANLTIVLPYNNIDAVEETFKKHGDDIACVIIEPVAGNMGVVAPSKEYHQRLREITKEYGALLIWDEVMTGFRLAYGGAQELYGIEPDLTTLGKVIGGGLPVGAYGGKREIMEYVAPVGPVYQAGTLSGNPLAMAGGLRQLQILKEKNPYPDLDRKGKKLEEGLRYLSEKYGIPATVNRVGSMITAFFTDKEVVDFETAKSSDLDRFAKFFRLMLEKGVYLAPSQFEAAFLSTAHSDEDIDETLNKAEDCFKQLL.

Lysine 267 carries the post-translational modification N6-(pyridoxal phosphate)lysine.

The protein belongs to the class-III pyridoxal-phosphate-dependent aminotransferase family. HemL subfamily. As to quaternary structure, homodimer. The cofactor is pyridoxal 5'-phosphate.

The protein resides in the cytoplasm. It catalyses the reaction (S)-4-amino-5-oxopentanoate = 5-aminolevulinate. Its pathway is porphyrin-containing compound metabolism; protoporphyrin-IX biosynthesis; 5-aminolevulinate from L-glutamyl-tRNA(Glu): step 2/2. The chain is Glutamate-1-semialdehyde 2,1-aminomutase from Persephonella marina (strain DSM 14350 / EX-H1).